We begin with the raw amino-acid sequence, 379 residues long: Guanine nucleotide-binding protein subunit alpha-12 (379 aa).

C11 carries S-palmitoyl cysteine lipidation. The 326-residue stretch at R54–Q379 folds into the G-alpha domain. The G1 motif stretch occupies residues K57–T70. GTP is bound by residues E65 to T70 and L200 to R203. S69 provides a ligand contact to Mg(2+). Positions D198–T206 are G2 motif. A Mg(2+)-binding site is contributed by T206. T206 carries the post-translational modification Phosphothreonine. The G3 motif stretch occupies residues F221–R230. The tract at residues I290–D297 is G4 motif. Residues N294 to D297 and A351 each bind GTP. The segment at T349 to T354 is G5 motif.

The protein belongs to the G-alpha family. G(12) subfamily. In terms of assembly, g proteins are composed of 3 units; alpha, beta and gamma. The alpha chain contains the guanine nucleotide binding site. Interacts with UBXD5. Interacts (in GTP-bound form) with PPP5C (via TPR repeats); activates PPP5C phosphatase activity and translocates PPP5C to the cell membrane. Interacts with RGS22. Interacts (via N-terminus) with NAPA; the interaction promotes CDH5 localization to plasma membrane. Interacts with CTNND1 (via N-terminus); the interaction regulates CDH1-mediated cell-cell adhesion. Interacts with PPP2R1A; the interaction promotes protein phosphatase 2A activation causing dephosphorylation of MAPT. Interacts (in GTP-bound form) with ARHGEF1. Interacts (in GTP-bound form) with ARHGEF11 (via RGS domain). Interacts (in GTP-bound form) with ARHGEF12 (via RGS domain).

It localises to the cell membrane. It is found in the lateral cell membrane. Its subcellular location is the cytoplasm. In terms of biological role, guanine nucleotide-binding proteins (G proteins) are involved as modulators or transducers in various transmembrane signaling systems. Activates effector molecule RhoA by binding and activating RhoGEFs (ARHGEF12/LARG). GNA12-dependent Rho signaling subsequently regulates transcription factor AP-1 (activating protein-1). GNA12-dependent Rho signaling also regulates protein phosphatese 2A activation causing dephosphorylation of its target proteins. Promotes tumor cell invasion and metastasis by activating RhoA/ROCK signaling pathway and up-regulating pro-inflammatory cytokine production. Inhibits CDH1-mediated cell adhesion in process independent from Rho activation. Together with NAPA promotes CDH5 localization to plasma membrane. May play a role in the control of cell migration through the TOR signaling cascade. This is Guanine nucleotide-binding protein subunit alpha-12 (Gna12) from Rattus norvegicus (Rat).